Here is a 592-residue protein sequence, read N- to C-terminus: Arginine--tRNA ligase (592 aa).

Residues 112–122 (VNPNKELHVGH) carry the 'HIGH' region motif.

The protein belongs to the class-I aminoacyl-tRNA synthetase family. In terms of assembly, monomer.

It is found in the cytoplasm. It catalyses the reaction tRNA(Arg) + L-arginine + ATP = L-arginyl-tRNA(Arg) + AMP + diphosphate. The sequence is that of Arginine--tRNA ligase from Thermus thermophilus (strain ATCC 27634 / DSM 579 / HB8).